The following is a 69-amino-acid chain: ATP synthase subunits region ORF 1 (69 aa).

The sequence is that of ATP synthase subunits region ORF 1 from Fuscovulum blasticum (Rhodobacter blasticus).